Reading from the N-terminus, the 364-residue chain is MNNLLLYCRPGFEKEAAAEITERASNMQCYGFARVKDDSGYVIFELYDEEQADLLARKLPFRELIFIRQMLVVTHELKDLDLSDRITPILEATQGYAICGDLRVETADTNEAKELSAFCRKFTVPLRQALRGNELLTKKETPHRPVFHAFFLANDHVLLGYSYSFNNSEFHMGIPRLRCPADAPSRSSLKLEEAFYVFVPREEWDMRLTSGMKAVDLGACPGGWTYQLVRRGMMVTAVDNGMMAQSLMDTGQVKHIRDDGFVWRPSKKNTYWLVCDMVDKPARVTHMIADWFRESDCQEAMFNLKLPMKKRYAEAVHNIEVLRELLKEIDNAFVIQAKQLYHDREEITVHVYNKYWVSKLSAKE.

Residues Ser-187, 220–223 (CPGG), Asp-239, Asp-259, and Asp-276 each bind S-adenosyl-L-methionine. The active-site Proton acceptor is Lys-305.

This sequence belongs to the class I-like SAM-binding methyltransferase superfamily. RNA methyltransferase RlmE family. RlmM subfamily. As to quaternary structure, monomer.

It localises to the cytoplasm. It catalyses the reaction cytidine(2498) in 23S rRNA + S-adenosyl-L-methionine = 2'-O-methylcytidine(2498) in 23S rRNA + S-adenosyl-L-homocysteine + H(+). Catalyzes the 2'-O-methylation at nucleotide C2498 in 23S rRNA. The sequence is that of Ribosomal RNA large subunit methyltransferase M from Aeromonas hydrophila subsp. hydrophila (strain ATCC 7966 / DSM 30187 / BCRC 13018 / CCUG 14551 / JCM 1027 / KCTC 2358 / NCIMB 9240 / NCTC 8049).